Consider the following 732-residue polypeptide: Zinc/cadmium/lead-transporting P-type ATPase (732 aa).

The Cytoplasmic portion of the chain corresponds to 1–124 (MSTPDNHGKK…QAADEPQASR (124 aa)). The HMA domain occupies 48–112 (TRYSWKVSGM…AVQKAGYSLR (65 aa)). Residues aspartate 58, cysteine 59, and cysteine 62 each contribute to the Zn(2+) site. A helical transmembrane segment spans residues 125–145 (LKENLPLITLIVMMAISWGLE). Position 146 (glutamine 146) is a topological domain, periplasmic. A helical membrane pass occupies residues 147-167 (FNHPFGQLAFIATTLVGLYPI). The Cytoplasmic segment spans residues 168–179 (ARQALRLIKSGS). A helical membrane pass occupies residues 180–197 (YFAIETLMSVAAIGALFI). The Periplasmic segment spans residues 198-202 (GATAE). Residues 203-222 (AAMVLLLFLIGERLEGWAAS) traverse the membrane as a helical segment. Residues 223–356 (RARQGVSALM…IDRFSRIYTP (134 aa)) are Cytoplasmic-facing. Residues 357–377 (AIMAVALLVTLVPPLLFAASW) form a helical membrane-spanning segment. Residues 378–383 (QEWIYK) are Periplasmic-facing. The helical transmembrane segment at 384–404 (GLTLLLIGCPCALVISTPAAI) threads the bilayer. The Zn(2+) site is built by cysteine 392 and cysteine 394. Residues 405–685 (TSGLAAAARR…RATHANIRQN (281 aa)) are Cytoplasmic-facing. Aspartate 436 acts as the 4-aspartylphosphate intermediate in catalysis. Mg(2+) contacts are provided by aspartate 436, threonine 438, and aspartate 628. Residues 686-702 (ITIALGLKGIFLVTTLL) traverse the membrane as a helical segment. Over 703–707 (GMTGL) the chain is Periplasmic. A helical transmembrane segment spans residues 708-729 (WLAVLADTGATVLVTANALRLL). Zn(2+) is bound at residue aspartate 714. Residues 730–732 (RRR) lie on the Cytoplasmic side of the membrane.

Belongs to the cation transport ATPase (P-type) (TC 3.A.3) family. Type IB subfamily.

Its subcellular location is the cell inner membrane. The catalysed reaction is Pb(2+)(in) + ATP + H2O = Pb(2+)(out) + ADP + phosphate + H(+). It carries out the reaction Zn(2+)(in) + ATP + H2O = Zn(2+)(out) + ADP + phosphate + H(+). The enzyme catalyses Cd(2+)(in) + ATP + H2O = Cd(2+)(out) + ADP + phosphate + H(+). Confers resistance to zinc, cadmium and lead. Couples the hydrolysis of ATP with the export of zinc, cadmium or lead. In Shigella sonnei (strain Ss046), this protein is Zinc/cadmium/lead-transporting P-type ATPase.